Reading from the N-terminus, the 282-residue chain is Pantothenate synthetase (282 aa).

30–37 lines the ATP pocket; it reads MGYLHEGH. The Proton donor role is filled by His37. Position 61 (Gln61) interacts with (R)-pantoate. Residue Gln61 coordinates beta-alanine. 147-150 is a binding site for ATP; that stretch reads GMKD. Gln153 is a (R)-pantoate binding site. Residues Val176 and 184–187 each bind ATP; that span reads KSSR.

Belongs to the pantothenate synthetase family. In terms of assembly, homodimer.

It is found in the cytoplasm. The catalysed reaction is (R)-pantoate + beta-alanine + ATP = (R)-pantothenate + AMP + diphosphate + H(+). It functions in the pathway cofactor biosynthesis; (R)-pantothenate biosynthesis; (R)-pantothenate from (R)-pantoate and beta-alanine: step 1/1. Its function is as follows. Catalyzes the condensation of pantoate with beta-alanine in an ATP-dependent reaction via a pantoyl-adenylate intermediate. This Bacillus cereus (strain B4264) protein is Pantothenate synthetase.